Reading from the N-terminus, the 104-residue chain is Small ubiquitin-related modifier 3 (104 aa).

Glycyl lysine isopeptide (Lys-Gly) (interchain with G-Cter in SUMO2) cross-links involve residues Lys5 and Lys7. Lys11 is covalently cross-linked (Glycyl lysine isopeptide (Lys-Gly) (interchain with G-Cter in SUMO); alternate). Residue Lys11 forms a Glycyl lysine isopeptide (Lys-Gly) (interchain with G-Cter in SUMO2); alternate linkage. In terms of domain architecture, Ubiquitin-like spans 15-92 (DHINLKVAGQ…IDVFQQQTGG (78 aa)). A Glycyl lysine isopeptide (Gly-Lys) (interchain with K-? in acceptor proteins) cross-link involves residue Gly92. A propeptide spanning residues 93–104 (SRVASCLLGSGL) is cleaved from the precursor.

It belongs to the ubiquitin family. SUMO subfamily. As to quaternary structure, interacts with SAE2 and UBE2I. Covalently attached to a number of proteins. Interacts with USP25 (via ts SIM domain); the interaction sumoylates USP25 and inhibits its ubiquitin hydrolyzing activity. Interacts with BMAL1. In terms of processing, polymeric chains can be formed through Lys-11 cross-linking. Post-translationally, cleavage of precursor form by SENP1, SENP2 or SENP5 is necessary for function.

The protein resides in the cytoplasm. It localises to the nucleus. The protein localises to the PML body. Its function is as follows. Ubiquitin-like protein which can be covalently attached to target lysines either as a monomer or as a lysine-linked polymer. Does not seem to be involved in protein degradation and may function as an antagonist of ubiquitin in the degradation process. Plays a role in a number of cellular processes such as nuclear transport, DNA replication and repair, mitosis and signal transduction. Covalent attachment to its substrates requires prior activation by the E1 complex SAE1-SAE2 and linkage to the E2 enzyme UBE2I, and can be promoted by an E3 ligase such as PIAS1-4, RANBP2 or CBX4. Plays a role in the regulation of sumoylation status of SETX. This is Small ubiquitin-related modifier 3 (SUMO3) from Bos taurus (Bovine).